The primary structure comprises 1048 residues: 3-hydroxy-3-methylglutaryl-coenzyme A reductase (1048 aa).

The Cytoplasmic segment spans residues 1 to 32 (MDPVVRKPDPGGVQHRVTKALRAIVGHACRHP). The chain crosses the membrane as a helical span at residues 33–53 (IHTLLVTALTAATTHLHVLEG). Over 54-220 (TYQATHRGLA…FLHRVHHAET (167 aa)) the chain is Lumenal. A helical membrane pass occupies residues 221–241 (VDLVIIGLSYLAMNMTVVSLF). The 182-residue stretch at 222–403 (DLVIIGLSYL…FTFYATILCV (182 aa)) folds into the SSD domain. Residues 242-250 (RVMRHLGSR) are Cytoplasmic-facing. Residues 251–271 (FWLAASVLLSGAFAFVLGLGI) form a helical membrane-spanning segment. At 272–276 (TTTCD) the chain is on the lumenal side. Residues 277–297 (VPVDMLLLFEGIPYLVLTVGF) traverse the membrane as a helical segment. Residues 298-348 (EKPIQLTRAVLCVSEELWGGGQRQVPNGASSDDSRQNQLIPNIIQLAVDRE) are Cytoplasmic-facing. A helical membrane pass occupies residues 349 to 369 (GWYIVRSYLLEIGALALGAVL). Residues 370 to 377 (RPKDSLGH) are Lumenal-facing. A helical transmembrane segment spans residues 378 to 398 (FCFLAAWTLLIDAVLLFTFYA). At 399–439 (TILCVKLEITRIRSPGGLGQVNAKHPSGIFGHKVKSTNITW) the chain is on the cytoplasmic side. The chain crosses the membrane as a helical span at residues 440-460 (WKLLTVGGFVLCHFLQLSPFF). Residues 461-542 (YRVMGEYMAN…LDGLESPLGR (82 aa)) lie on the Lumenal side of the membrane. N-linked (GlcNAc...) asparagine glycans are attached at residues asparagine 470 and asparagine 520. The helical transmembrane segment at 543 to 563 (LCLMGALVVSLVLNNHLIHAA) threads the bilayer. At 564 to 1048 (RWHAWPQARE…NRSAGATVKK (485 aa)) the chain is on the cytoplasmic side. Catalysis depends on glutamate 729, which acts as the Charge relay system. 735–741 (SASRGCK) serves as a coordination point for CoA. Residues 796 to 798 (SRF) and 823 to 831 (DAMGMNMIS) each bind NADP(+). The active-site Charge relay system is the lysine 863. 892-894 (VLK) contacts CoA. The active-site Charge relay system is aspartate 939. 1034-1035 (AH) is a binding site for CoA. Catalysis depends on histidine 1035, which acts as the Proton donor. Position 1039–1040 (1039–1040 (NR)) interacts with NADP(+).

Belongs to the HMG-CoA reductase family.

The protein resides in the endoplasmic reticulum membrane. The enzyme catalyses (R)-mevalonate + 2 NADP(+) + CoA = (3S)-3-hydroxy-3-methylglutaryl-CoA + 2 NADPH + 2 H(+). Its pathway is metabolic intermediate biosynthesis; (R)-mevalonate biosynthesis; (R)-mevalonate from acetyl-CoA: step 3/3. In terms of biological role, HMG-CoA reductase; part of the first module of ergosterol biosynthesis pathway that includes the early steps of the pathway, conserved across all eukaryotes, and which results in the formation of mevalonate from acetyl-coenzyme A (acetyl-CoA). In this module, the cytosolic acetyl-CoA acetyltransferase catalyzes the formation of acetoacetyl-CoA. The hydroxymethylglutaryl-CoA synthase then condenses acetyl-CoA with acetoacetyl-CoA to form HMG-CoA. The rate-limiting step of the early module is the reduction to mevalonate by the 3-hydroxy-3-methylglutaryl-coenzyme A (HMG-CoA) reductase. The chain is 3-hydroxy-3-methylglutaryl-coenzyme A reductase from Aspergillus terreus.